A 215-amino-acid polypeptide reads, in one-letter code: Protein-L-isoaspartate O-methyltransferase 1 (215 aa).

S61 is an active-site residue.

This sequence belongs to the methyltransferase superfamily. L-isoaspartyl/D-aspartyl protein methyltransferase family.

It is found in the cytoplasm. It carries out the reaction [protein]-L-isoaspartate + S-adenosyl-L-methionine = [protein]-L-isoaspartate alpha-methyl ester + S-adenosyl-L-homocysteine. In terms of biological role, catalyzes the methyl esterification of L-isoaspartyl residues in peptides and proteins that result from spontaneous decomposition of normal L-aspartyl and L-asparaginyl residues. It plays a role in the repair and/or degradation of damaged proteins. The chain is Protein-L-isoaspartate O-methyltransferase 1 from Pelobacter propionicus (strain DSM 2379 / NBRC 103807 / OttBd1).